A 219-amino-acid chain; its full sequence is tRNA (guanine-N(7)-)-methyltransferase (219 aa).

Residues E46, E71, N100, and D122 each coordinate S-adenosyl-L-methionine. D122 is a catalytic residue. Substrate contacts are provided by residues K126, D158, and 199–202 (TEYE).

The protein belongs to the class I-like SAM-binding methyltransferase superfamily. TrmB family.

It catalyses the reaction guanosine(46) in tRNA + S-adenosyl-L-methionine = N(7)-methylguanosine(46) in tRNA + S-adenosyl-L-homocysteine. It participates in tRNA modification; N(7)-methylguanine-tRNA biosynthesis. In terms of biological role, catalyzes the formation of N(7)-methylguanine at position 46 (m7G46) in tRNA. The chain is tRNA (guanine-N(7)-)-methyltransferase from Leuconostoc mesenteroides subsp. mesenteroides (strain ATCC 8293 / DSM 20343 / BCRC 11652 / CCM 1803 / JCM 6124 / NCDO 523 / NBRC 100496 / NCIMB 8023 / NCTC 12954 / NRRL B-1118 / 37Y).